The chain runs to 202 residues: Methylthioribulose-1-phosphate dehydratase (202 aa).

Positions 93 and 95 each coordinate Zn(2+).

This sequence belongs to the aldolase class II family. MtnB subfamily. It depends on Zn(2+) as a cofactor.

The enzyme catalyses 5-(methylsulfanyl)-D-ribulose 1-phosphate = 5-methylsulfanyl-2,3-dioxopentyl phosphate + H2O. The protein operates within amino-acid biosynthesis; L-methionine biosynthesis via salvage pathway; L-methionine from S-methyl-5-thio-alpha-D-ribose 1-phosphate: step 2/6. In terms of biological role, catalyzes the dehydration of methylthioribulose-1-phosphate (MTRu-1-P) into 2,3-diketo-5-methylthiopentyl-1-phosphate (DK-MTP-1-P). This chain is Methylthioribulose-1-phosphate dehydratase, found in Klebsiella pneumoniae subsp. pneumoniae (strain ATCC 700721 / MGH 78578).